The primary structure comprises 285 residues: Protein pxr1 (285 aa).

Basic residues predominate over residues 1–11 (MGLAAPRKKIK). Residues 1-23 (MGLAAPRKKIKISHDPNNTNWSR) form a disordered region. The G-patch domain maps to 25–79 (TSGFGHKILSSQGWTPGSFLGARNAAHAEMFTAASASHIKVVLKDDTLGLGARPK). Residues 144–263 (TPIVTEEPQG…MGRHVFRGRH (120 aa)) are disordered. The span at 152 to 163 (QGIHKDKQEDKL) shows a compositional bias: basic and acidic residues. Over residues 190-208 (KKKKSKSKNHREKKDRKRK) the composition is skewed to basic residues. Basic and acidic residues predominate over residues 224-234 (RSTEKKSKATR). A compositionally biased stretch (basic residues) spans 254–263 (MGRHVFRGRH).

This sequence belongs to the PINX1 family.

The protein localises to the nucleus. The protein resides in the nucleolus. Functionally, involved in rRNA-processing at A0, A1 and A2 sites and negatively regulates telomerase. This chain is Protein pxr1 (pxr1), found in Aspergillus niger (strain ATCC MYA-4892 / CBS 513.88 / FGSC A1513).